Consider the following 347-residue polypeptide: Farnesyl pyrophosphate synthase (347 aa).

The isopentenyl diphosphate site is built by K50, R53, and Q88. Mg(2+) contacts are provided by D95 and D99. R104 lines the dimethylallyl diphosphate pocket. R105 lines the isopentenyl diphosphate pocket. Positions 192, 193, 232, 249, and 258 each coordinate dimethylallyl diphosphate.

The protein belongs to the FPP/GGPP synthase family. In terms of assembly, interacts with spo9. Mg(2+) serves as cofactor.

It is found in the cytoplasm. The protein localises to the nucleus. The catalysed reaction is isopentenyl diphosphate + dimethylallyl diphosphate = (2E)-geranyl diphosphate + diphosphate. It carries out the reaction isopentenyl diphosphate + (2E)-geranyl diphosphate = (2E,6E)-farnesyl diphosphate + diphosphate. It functions in the pathway isoprenoid biosynthesis; farnesyl diphosphate biosynthesis; farnesyl diphosphate from geranyl diphosphate and isopentenyl diphosphate: step 1/1. Its pathway is isoprenoid biosynthesis; geranyl diphosphate biosynthesis; geranyl diphosphate from dimethylallyl diphosphate and isopentenyl diphosphate: step 1/1. Functionally, farnesyl pyrophosphate synthase; part of the second module of ergosterol biosynthesis pathway that includes the middle steps of the pathway. Fps1 catalyzes the sequential condensation of isopentenyl pyrophosphate with dimethylallyl pyrophosphate, and then with the resultant geranylpyrophosphate to the ultimate product farnesyl pyrophosphate. The second module is carried out in the vacuole and involves the formation of farnesyl diphosphate, which is also an important intermediate in the biosynthesis of ubiquinone, dolichol, heme and prenylated proteins. Activity by the mevalonate kinase erg12 first converts mevalonate into 5-phosphomevalonate. 5-phosphomevalonate is then further converted to 5-diphosphomevalonate by the phosphomevalonate kinase erg8. The diphosphomevalonate decarboxylase mvd1 then produces isopentenyl diphosphate. The isopentenyl-diphosphate delta-isomerase idi1 then catalyzes the 1,3-allylic rearrangement of the homoallylic substrate isopentenyl (IPP) to its highly electrophilic allylic isomer, dimethylallyl diphosphate (DMAPP). Finally the farnesyl diphosphate synthase fps1 catalyzes the sequential condensation of isopentenyl pyrophosphate with dimethylallyl pyrophosphate, and then with the resultant geranylpyrophosphate to the ultimate product farnesyl pyrophosphate. In Schizosaccharomyces pombe (strain 972 / ATCC 24843) (Fission yeast), this protein is Farnesyl pyrophosphate synthase.